The primary structure comprises 48 residues: Delta-stichotoxin-Hmg4a (48 aa).

3 disulfides stabilise this stretch: Cys3-Cys43, Cys5-Cys33, and Cys26-Cys44.

This sequence belongs to the sea anemone sodium channel inhibitory toxin family. Type II subfamily.

The protein localises to the secreted. It localises to the nematocyst. Its function is as follows. Binds specifically to voltage-gated sodium channels (Nav), thereby delaying their inactivation during signal transduction. Its toxicity is weaker than that of RpIII (AC P08380). This is Delta-stichotoxin-Hmg4a from Heteractis magnifica (Magnificent sea anemone).